Consider the following 525-residue polypeptide: MSNIHEHKILILDFGSQYTQLIARRIREIGVYCELWAWDVTEAQIREFAPNGIVLAGGPESVTEDNSPRAPEYVFDAGVPVLGICYGMQTMSEQLGGKVIQGVGEREFGYAQVEVLTDSALLRHIEDGISDAGKPVLDVWMSHGDKVSAIPEGFVAVAKTETCPFAVMANEDKKFYGVQFHPEVTHTRQGKRMLEHFVMDICGCDNKWQPASIIEDAVERIKAQVGDDEVILGLSGGVDSSVTAMLLHRAIGERLTCVFVDNGLLRLNEAKQVLEMFGDHFGLNIVHVDAENRFLEALKGENDPEAKRKIIGRVFVEIFDEEASKCVNAKWLAQGTIYPDVIESAGSATGKAHVIKSHHNVGGLPDDMELGLVEPLRELFKDEVRKIGLELGLPYDMLYRHPFPGPGLGVRVLGEVKKEYCDLLRRADAIFIEELHRADLYNKVSQAFTVFLPVRSVGVMGDGRKYDWVVSLRAVETIDFMTAHWAHLPYDFLGRVSNRIINEVDGISRVVYDISGKPPATIEWE.

In terms of domain architecture, Glutamine amidotransferase type-1 spans 8 to 207 (KILILDFGSQ…VMDICGCDNK (200 aa)). Catalysis depends on cysteine 85, which acts as the Nucleophile. Catalysis depends on residues histidine 181 and glutamate 183. Residues 208–400 (WQPASIIEDA…LGLPYDMLYR (193 aa)) enclose the GMPS ATP-PPase domain. An ATP-binding site is contributed by 235–241 (SGGVDSS).

As to quaternary structure, homodimer.

It carries out the reaction XMP + L-glutamine + ATP + H2O = GMP + L-glutamate + AMP + diphosphate + 2 H(+). Its pathway is purine metabolism; GMP biosynthesis; GMP from XMP (L-Gln route): step 1/1. Its function is as follows. Catalyzes the synthesis of GMP from XMP. This is GMP synthase [glutamine-hydrolyzing] from Shewanella amazonensis (strain ATCC BAA-1098 / SB2B).